A 154-amino-acid chain; its full sequence is CASP-like protein ARALYDRAFT_485429 (154 aa).

The Cytoplasmic portion of the chain corresponds to 1–12; it reads MENVPGSFGTSA. The helical transmembrane segment at 13–33 threads the bilayer; sequence SFALRFGQTIFSAASLIFMCF. Over 34–41 the chain is Extracellular; sequence DYDFYDFT. A helical membrane pass occupies residues 42–62; that stretch reads TFCYLATVMAIVTPWSILLAL. The Cytoplasmic segment spans residues 63–81; sequence TDTYSVLVKLLPQELRVLS. The chain crosses the membrane as a helical span at residues 82-102; the sequence is IVFAGDFVLSFLSLGGACAVA. Over 103-128 the chain is Extracellular; it reads SATELLASADGKICDGNLCIQYQVSA. Residues 129-149 traverse the membrane as a helical segment; the sequence is ALAFLCWFLLLASALFNFWSL. Over 150–154 the chain is Cytoplasmic; the sequence is PSLYY.

Belongs to the Casparian strip membrane proteins (CASP) family. In terms of assembly, homodimer and heterodimers.

Its subcellular location is the cell membrane. This chain is CASP-like protein ARALYDRAFT_485429, found in Arabidopsis lyrata subsp. lyrata (Lyre-leaved rock-cress).